The following is a 2527-amino-acid chain: Highly reducing polyketide synthase poxF (2527 aa).

A Ketosynthase family 3 (KS3) domain is found at 20-445; sequence VMPIAIIGMA…GANAHVIVES (426 aa). Active-site for beta-ketoacyl synthase activity residues include Cys-193, His-328, and His-368. Residues 560 to 882 form a malonyl-CoA:ACP transacylase (MAT) domain region; it reads VFTGQGAQWF…TYASCLSRGQ (323 aa). Residues 951–1086 are N-terminal hotdog fold; it reads HDLLGVPAAG…GLCCTPSPAQ (136 aa). The segment at 951–1243 is dehydratase (DH) domain; it reads HDLLGVPAAG…SVRVINNAGT (293 aa). The PKS/mFAS DH domain occupies 951–1270; sequence HDLLGVPAAG…CQSLGSSAVV (320 aa). His-983 serves as the catalytic Proton acceptor; for dehydratase activity. Residues 1108-1270 form a C-terminal hotdog fold region; the sequence is AWRILNPADT…CQSLGSSAVV (163 aa). The active-site Proton donor; for dehydratase activity is the Asp-1174. Positions 1406 to 1587 are methyltransferase (CMet) domain; sequence EDQAEWSSVS…RLLAKAGFEP (182 aa). The tract at residues 1823 to 2137 is enoyl reductase (ER) (ER) domain; that stretch reads GLLNSLVFTE…TGKHMGKIVL (315 aa). Residues 2162–2339 form a ketoreductase (KR) domain region; sequence TYLLVGGVGG…AVSIDLGMVS (178 aa). The 78-residue stretch at 2445-2522 folds into the Carrier domain; it reads EVTTLIQSAL…GLAGQMAKKS (78 aa). An O-(pantetheine 4'-phosphoryl)serine modification is found at Ser-2482.

Its pathway is secondary metabolite biosynthesis. Its function is as follows. Highly reducing polyketide synthase; part of the gene cluster that mediates the biosynthesis of oxaleimides, cytotoxic compounds containing an unusual disubstituted succinimide moiety. The first step of the pathway is provided by the HR-PKS poxF that serves in a new mode of collaborative biosynthesis with the PKS-NRPS poxE, by providing the olefin containing amino acid substrate via the synthesis of an ACP-bound dec-4-enoate. The cytochrome P450 monooxygenase poxM-catalyzed oxidation at the alpha-position creates the enzyme-bound 2-hydroxydec-4-enoyl-ACP thioester, which may be prone to spontaneous hydrolysis to yield 2-hydroxydec-4-enoic acid due to increased electrophilicity of the carbonyl. 2-hydroxydec-4-enoic acid can then be further oxidized by poxM to yield the alpha-ketoacid 2-oxodec-4-enoicacid, which is reductively aminated by the aminotransferase poxL to yield (S,E)-2-aminodec-4-enoic acid. The Hybrid PKS-NRPS synthetase poxE then performs condensation between the octaketide product of its PKS modules and the amino group of (S,E)-2-aminodec-4-enoic acid which is activated and incorporated by the adenylation domain. The resulting aminoacyl product can be cyclized by the Diels-Alderase PoxQ and reductively released by the reductive (R) domain of poxE to yield an aldehyde intermediate. The released aldehyde is then substrate for a Knoevenagel condensation by the hydrolyase poxO followed by an oxidation at the 5-position of the pyrrolidone ring. The presence of the olefin from the amino acid building block allows for migration of the substituted allyl group to occur. This allylic transposition reaction takes place in a conjugate addition, semipinacol-like fashion to yield a succinimide intermediate. Iterative two-electron oxidations of the C7 methyl of the succinimide intermediate to the carboxylic acid can be catalyzed by one of two remaining cytochrome P450 monooxygenasess poxC or poxD to yield oxaleimide A. Subsequent oxidation yields the maleimide scaffold oxaleimide I. Both oxaleimide A and oxaleimide I can undergo oxidative modifications in the decalin ring to yield the series of products oxaleimides B to H. The chain is Highly reducing polyketide synthase poxF from Penicillium oxalicum.